The primary structure comprises 599 residues: Aspartate--tRNA(Asp/Asn) ligase (599 aa).

Residue Glu-183 coordinates L-aspartate. The aspartate stretch occupies residues 207–210 (QIFK). Residue Arg-229 participates in L-aspartate binding. ATP contacts are provided by residues 229 to 231 (RDE) and Gln-238. His-456 contributes to the L-aspartate binding site. Glu-490 serves as a coordination point for ATP. Arg-497 is a binding site for L-aspartate. 542–545 (GLDR) contributes to the ATP binding site.

It belongs to the class-II aminoacyl-tRNA synthetase family. Type 1 subfamily. As to quaternary structure, homodimer.

Its subcellular location is the cytoplasm. It carries out the reaction tRNA(Asx) + L-aspartate + ATP = L-aspartyl-tRNA(Asx) + AMP + diphosphate. Functionally, aspartyl-tRNA synthetase with relaxed tRNA specificity since it is able to aspartylate not only its cognate tRNA(Asp) but also tRNA(Asn). Reaction proceeds in two steps: L-aspartate is first activated by ATP to form Asp-AMP and then transferred to the acceptor end of tRNA(Asp/Asn). The polypeptide is Aspartate--tRNA(Asp/Asn) ligase (Protochlamydia amoebophila (strain UWE25)).